A 914-amino-acid polypeptide reads, in one-letter code: NADH-quinone oxidoreductase subunit G (914 aa).

The region spanning 1–83 (MATIHVDGKE…GTFISIDDSE (83 aa)) is the 2Fe-2S ferredoxin-type domain. 4 residues coordinate [2Fe-2S] cluster: Cys-34, Cys-45, Cys-48, and Cys-67. The 4Fe-4S His(Cys)3-ligated-type domain occupies 83–122 (EAKAFRESVVEWLMTNHPHDCPVCEEGGNCHLQDMTVMTG). Residues His-99, Cys-103, Cys-106, Cys-112, Cys-151, Cys-154, Cys-157, Cys-201, Cys-228, Cys-231, Cys-235, and Cys-263 each contribute to the [4Fe-4S] cluster site. Residues 221 to 277 (MQFAPSICQQCSVGCNTSPGERYGELRRIENRYNGSVNHYFMCDRGRFGYGYVNLKD) enclose the 4Fe-4S Mo/W bis-MGD-type domain.

The protein belongs to the complex I 75 kDa subunit family. As to quaternary structure, composed of 13 different subunits. Subunits NuoCD, E, F, and G constitute the peripheral sector of the complex. [2Fe-2S] cluster is required as a cofactor. It depends on [4Fe-4S] cluster as a cofactor.

The enzyme catalyses a quinone + NADH + 5 H(+)(in) = a quinol + NAD(+) + 4 H(+)(out). NDH-1 shuttles electrons from NADH, via FMN and iron-sulfur (Fe-S) centers, to quinones in the respiratory chain. The immediate electron acceptor for the enzyme in this species is believed to be ubiquinone. Couples the redox reaction to proton translocation (for every two electrons transferred, four hydrogen ions are translocated across the cytoplasmic membrane), and thus conserves the redox energy in a proton gradient. In Yersinia pestis, this protein is NADH-quinone oxidoreductase subunit G (nuoG).